A 415-amino-acid polypeptide reads, in one-letter code: MKLKSLLLRYYPPGIMLEYEKGGELKTKSIDLLELSPSTDVNTLVGEIQKVEPLITASRTKQVRLLVQRLQEKLRQHCDHNFYLFKVLRAHILPLTNVALNKAGSCFITGSYDRTCKVWDTASGEELHTLEGHRNVVYAIAFNNPYGDKIATGSFDKTCKLWSAETGKCYHTFRGHTAEIVCLSFNPQSTVVATGSMDTTAKLWDIQSGEEVVTLTGHLAEIISLSFDTSGDRIITGSFDHTVVVWDASTGRKVHTLIGHCAEISSALFSWDCSLILTGSMDKTCMLWDATSGKCVATLTGHDDEILDSCFDYTGKLIATASADGTARVYNATTRKCITKLEGHEGEISKISFNPQGNRLLTGSSDKTARIWDVQTGQCLQVLEGHTDEIFSCAFNYKGNIVITGSKDNSCRIWR.

WD repeat units lie at residues 90-129 (AHIL…ELHT), 132-174 (GHRN…HTFR), 175-214 (GHTA…EVVT), 217-256 (GHLA…KVHT), 259-298 (GHCA…CVAT), 301-340 (GHDD…CITK), 343-384 (GHEG…QVLE), and 386-415 (HTDE…RIWR).

It belongs to the WD repeat WDR69 family. In terms of assembly, interacts with IFT46.

The protein resides in the cytoplasm. The protein localises to the cytoskeleton. Its subcellular location is the flagellum basal body. It localises to the flagellum axoneme. Required for axonemal dynein assembly and ciliary motility in ciliated organs, including Kupffer's vesicle, during embryogenesis. Facilitates the onset of robust cilia motility during development. The protein is Dynein assembly factor with WD repeat domains 1 (Daw1) of Rattus norvegicus (Rat).